The chain runs to 117 residues: Inner kinetochore subunit MHF1 (117 aa).

Belongs to the TAF9 family. CENP-S/MHF1 subfamily. The MHF histone-fold complex is a heterotetramer of 2 MHF1-MHF2 heterodimers. Together with MPH1/FANCM, forms the FANCM-MHF complex. Component of the inner kinetochore constitutive centromere-associated network (CCAN).

Its function is as follows. dsDNA-binding component of a FANCM-MHF complex involved in DNA damage repair and genome maintenance. FANCM-MHF promotes gene conversion at blocked replication forks, probably by reversal of the stalled fork. Component of the kinetochore, a multiprotein complex that assembles on centromeric DNA and attaches chromosomes to spindle microtubules, mediating chromosome segregation and sister chromatid segregation during meiosis and mitosis. Component of the inner kinetochore constitutive centromere-associated network (CCAN), which serves as a structural platform for outer kinetochore assembly. This chain is Inner kinetochore subunit MHF1, found in Candida albicans (strain SC5314 / ATCC MYA-2876) (Yeast).